Here is a 1300-residue protein sequence, read N- to C-terminus: CRISPR-associated endonuclease Cas12a (1300 aa).

The wedge region 1 stretch occupies residues 1 to 24 (MSIYQEFVNKYSLSKTLRFELIPQ). 2 recognition domain regions span residues 25-339 (GKTL…SFVI) and 340-591 (DKLE…QKPY). 2 binds crRNA alone and in crRNA-target DNA heteroduplex regions span residues 47 to 51 (YKKAK) and 182 to 186 (FHENR). Positions 301-305 (NEYIN) are binds DNA in crRNA-target DNA heteroduplex. Binds crRNA in crRNA-target DNA heteroduplex regions lie at residues 326–329 (KQIL) and 538–541 (HKLK). A binds crRNA region spans residues 591–595 (YSDEK). Residues 592-662 (SDEKFKLNFE…GYKKIVYKLL (71 aa)) are wedge region 2. The interval 662–679 (LPGANKMLPKVFFSAKSI) is LKL, important for PAM recognition and DNA unwinding. Residues 663 to 762 (PGANKMLPKV…FYREVENQGY (100 aa)) form a PAM-interacting domain (PI) region. Residues 671 to 677 (KVFFSAK) are binds DNA protospacer adjacent motif (PAM) on target DNA. Residues 692-704 (RNHSTHTKNGSPQ) are binds single-strand non-target DNA. The interval 763-892 (KLTFENISES…PITINFKSSG (130 aa)) is wedge region 3. Binds crRNA regions lie at residues 791 to 794 (KDFS) and 803 to 804 (LH). Residues His-843, Lys-852, and Lys-869 each act as for pre-crRNA processing in the active site. Binds crRNA regions lie at residues 851–853 (NKN) and 865–873 (YDLIKDKRF). The interval 893–953 (ANKFNDEINL…IGNDRMKTNY (61 aa)) is ruvC-I. Asp-917 functions as the For DNase activity of RuvC domain in the catalytic mechanism. The tract at residues 954-971 (HDKLAAIEKDRDSARKDW) is bridge helix. A ruvC-II region spans residues 972–1078 (KKINNIKEMK…KQTGIIYYVP (107 aa)). The For DNase activity of RuvC domain role is filled by Glu-1006. The segment at 1079–1254 (AGFTSKICPV…QAPKNMPQDA (176 aa)) is nuclease domain. Residue Asp-1255 is the For DNase activity of RuvC domain of the active site. A ruvC-III region spans residues 1255–1300 (DANGAYHIGLKGLMLLGRIKNNQEGKKLNLVIKNEEYFEFVQNRNN).

This sequence belongs to the CRISPR-associated endonuclease Cas12a family. In terms of assembly, might be a homodimer. Might be a monomer. It depends on Ca(2+) as a cofactor. Mg(2+) is required as a cofactor.

The enzyme catalyses Endonucleolytic cleavage to 5'-phosphodinucleotide and 5'-phosphooligonucleotide end-products.. The catalysed reaction is RNA = a 5'-hydroxy-ribonucleotide + n nucleoside-2',3'-cyclophosphates.. Functionally, CRISPR (clustered regularly interspaced short palindromic repeat), is an adaptive immune system that provides protection against mobile genetic elements (viruses, transposable elements and conjugative plasmids). CRISPR clusters contain sequences complementary to antecedent mobile elements and target invading nucleic acids. CRISPR clusters are transcribed and processed into CRISPR RNA (crRNA). Has endonuclease activity on pre-crRNA and dsDNA, using different active sites. A single-RNA guided endonuclease that is also capable of guiding crRNA processing; correct processing of pre-crRNA requires only this protein and the CRISPR locus. pre-crRNA processing proceeds by an intramolecular nucleophilic attack on the scissile phosphate by the 2'-OH of the upstream ribonucleotide, the divalent cation (which is bound by the crRNA) is probably required for ordering the crRNA pseudoknot and/or increasing RNA binding. RNA mutagenesis studies show pre-crRNA cleavage is highly sequence- and structure-specific. Forms a complex with crRNA and complementary dsDNA, where the crRNA displaces the non-target DNA strand and directs endonucleolytic cleavage of both strands of the DNA. Cleavage results in staggered 5-base 5' overhangs 14-18 and 21-23 bases downstream of the PAM (protospacer adjacent motif) on the non-target and target strands respectively. Both target and non-target strand DNA are probably independently cleaved in the same active site. When this protein is expressed in E.coli it prevents plasmids homologous to the first CRISPR spacer from transforming, formally showing it is responsible for plasmid immunity. The sequence is that of CRISPR-associated endonuclease Cas12a from Francisella tularensis subsp. novicida (strain U112).